Consider the following 207-residue polypeptide: Succinyl-CoA:3-ketoacid coenzyme A transferase subunit B (207 aa).

E43 is an active-site residue.

This sequence belongs to the 3-oxoacid CoA-transferase subunit B family. As to quaternary structure, heterodimer of a subunit A and a subunit B.

It catalyses the reaction a 3-oxo acid + succinyl-CoA = a 3-oxoacyl-CoA + succinate. This chain is Succinyl-CoA:3-ketoacid coenzyme A transferase subunit B (scoB), found in Helicobacter pylori (strain J99 / ATCC 700824) (Campylobacter pylori J99).